Reading from the N-terminus, the 122-residue chain is UPF0102 protein DIP1513 (122 aa).

This sequence belongs to the UPF0102 family.

The chain is UPF0102 protein DIP1513 from Corynebacterium diphtheriae (strain ATCC 700971 / NCTC 13129 / Biotype gravis).